A 276-amino-acid chain; its full sequence is Outer membrane lipoprotein 2 (276 aa).

A signal peptide spans 1-19 (MNFKKLLGVALVSALALTA). Cys20 carries N-palmitoyl cysteine lipidation. A lipid anchor (S-diacylglycerol cysteine) is attached at Cys20.

The protein belongs to the NlpA lipoprotein family.

It localises to the cell outer membrane. This chain is Outer membrane lipoprotein 2 (plpB), found in Mannheimia haemolytica (Pasteurella haemolytica).